A 386-amino-acid polypeptide reads, in one-letter code: S-adenosylmethionine synthase (386 aa).

Position 14 (His-14) interacts with ATP. Asp-16 serves as a coordination point for Mg(2+). Glu-42 is a K(+) binding site. The L-methionine site is built by Glu-55 and Gln-101. The segment at 101–111 (QSADIALGVDE) is flexible loop. ATP-binding positions include 166–168 (DGK), 233–234 (RF), Asp-242, 248–249 (RK), Ala-265, and Lys-269. Asp-242 serves as a coordination point for L-methionine. Lys-273 serves as a coordination point for L-methionine.

It belongs to the AdoMet synthase family. In terms of assembly, homotetramer; dimer of dimers. Mg(2+) is required as a cofactor. It depends on K(+) as a cofactor.

The protein localises to the cytoplasm. The catalysed reaction is L-methionine + ATP + H2O = S-adenosyl-L-methionine + phosphate + diphosphate. It participates in amino-acid biosynthesis; S-adenosyl-L-methionine biosynthesis; S-adenosyl-L-methionine from L-methionine: step 1/1. Catalyzes the formation of S-adenosylmethionine (AdoMet) from methionine and ATP. The overall synthetic reaction is composed of two sequential steps, AdoMet formation and the subsequent tripolyphosphate hydrolysis which occurs prior to release of AdoMet from the enzyme. This Acholeplasma laidlawii (strain PG-8A) protein is S-adenosylmethionine synthase.